Reading from the N-terminus, the 426-residue chain is Inhibin beta A chain (426 aa).

An N-terminal signal peptide occupies residues 1–20 (MPLLWLRGFLLASCWIIVRS). Positions 21 to 310 (SPTPGSEGHS…EDHPHRRRRR (290 aa)) are excised as a propeptide. Asparagine 165 carries an N-linked (GlcNAc...) asparagine glycan. The tract at residues 259-288 (KKKKKEEEGEGKKKGGGEGGAGADEEKEQS) is disordered. The span at 263 to 274 (KEEEGEGKKKGG) shows a compositional bias: basic and acidic residues. Cystine bridges form between cysteine 314–cysteine 322, cysteine 321–cysteine 391, cysteine 350–cysteine 423, and cysteine 354–cysteine 425.

Belongs to the TGF-beta family. In terms of assembly, dimeric, linked by one or more disulfide bonds. Inhibin A is a dimer of alpha/INHA and beta-A/INHBA. Activin A is a homodimer of beta-A/INHBA. Activin AB is a dimer of beta-A/INHBA and beta-B/INHBB. Interacts with FST and FSTL3; these interactions prevent activin A interaction to its type II receptor. Activin A interacts with ACVR2A. Activin A interacts with BMPR2. Inhibin A interacts with ACVR1; this interaction creates a non-signaling complex (NSC) that inhibits ACVR1-mediated BMP signaling. Inhibin A interacts with ACVR2A.

The protein resides in the secreted. In terms of biological role, inhibins/activins are involved in regulating a number of diverse functions such as hypothalamic and pituitary hormone secretion, gonadal hormone secretion, germ cell development and maturation, erythroid differentiation, insulin secretion, nerve cell survival, embryonic axial development or bone growth, depending on their subunit composition. Its function is as follows. Activin A is a homodimer of INHBA that plays a role in several essential biological processes including embryonic development, stem cell maintenance and differentiation, haematopoiesis, cell proliferation and tissue fibrosis. Signals through type I (such as ACVR1B or ACVR1C) and type II receptors (such as ACVR2A, ACVR2B or BMPR2) which, upon ligand binding, phosphorylate SMAD2 and SMAD3 intracellular signaling mediators that form a complex with SMAD4, translocate to the nucleus and modulate gene expression. Can also activate alternative non-canonical intracellular signaling pathways including the p38 MAPK, extracellular signal-regulated kinases 1/2 (ERK1/2) and c-Jun N-terminal kinases (JNKs) to modulate cell migration and differentiation. Alternatively, promotes osteoblastic differentiation via ACVRL1-SMAD1/5/9 pathway. In addition, can engage the type I receptor ACVR1 to form an ACVR1-activin A-type II receptor non-signaling complex (NSC) that renders receptors unavailable for engagement with BMPs, hence resulting in an apparent inhibition of ACVR1-mediated BMP signaling. Functionally, inhibin A is a dimer of alpha/INHA and beta-A/INHBA that functions as a feedback regulator in the hypothalamic-pituitary-gonadal (HPG) axis. Inhibits the secretion of FSH from the anterior pituitary gland by acting on pituitary gonadotrope cells. Antagonizes activin A by binding to the proteoglycan, betaglycan, and forming a stable complex with and, thereby, sequestering type II activin receptors while excluding type I receptor. In Homo sapiens (Human), this protein is Inhibin beta A chain (INHBA).